Reading from the N-terminus, the 361-residue chain is NudC domain-containing protein 3 (361 aa).

The span at Lys87 to Lys97 shows a compositional bias: basic and acidic residues. 2 disordered regions span residues Lys87–Lys106 and Leu124–Ala158. The residue at position 146 (Ser146) is a Phosphoserine. Over residues Glu148 to Ala158 the composition is skewed to low complexity. Positions Ala185 to Leu277 constitute a CS domain. A phosphoserine mark is found at Ser340 and Ser355.

This is NudC domain-containing protein 3 (NUDCD3) from Homo sapiens (Human).